Here is a 105-residue protein sequence, read N- to C-terminus: Large ribosomal subunit protein uL24 (105 aa).

This sequence belongs to the universal ribosomal protein uL24 family. Part of the 50S ribosomal subunit.

In terms of biological role, one of two assembly initiator proteins, it binds directly to the 5'-end of the 23S rRNA, where it nucleates assembly of the 50S subunit. Its function is as follows. One of the proteins that surrounds the polypeptide exit tunnel on the outside of the subunit. The polypeptide is Large ribosomal subunit protein uL24 (Dictyoglomus thermophilum (strain ATCC 35947 / DSM 3960 / H-6-12)).